We begin with the raw amino-acid sequence, 125 residues long: MADLTKLVDELSSLTVLEAAELAKLLEEKWGVSAAAAVAVAAAPAAGGAAAAVEEQTEFTVVLANAGDKKIEVIKEVRAITGLGLKEAKDLVEGAPKPVKEGVAKDEAEKLKAQLEKAGAKVELK.

It belongs to the bacterial ribosomal protein bL12 family. Homodimer. Part of the ribosomal stalk of the 50S ribosomal subunit. Forms a multimeric L10(L12)X complex, where L10 forms an elongated spine to which 2 to 4 L12 dimers bind in a sequential fashion. Binds GTP-bound translation factors.

Forms part of the ribosomal stalk which helps the ribosome interact with GTP-bound translation factors. Is thus essential for accurate translation. The chain is Large ribosomal subunit protein bL12 from Azorhizobium caulinodans (strain ATCC 43989 / DSM 5975 / JCM 20966 / LMG 6465 / NBRC 14845 / NCIMB 13405 / ORS 571).